Here is a 74-residue protein sequence, read N- to C-terminus: Small ribosomal subunit protein bS18 (74 aa).

This sequence belongs to the bacterial ribosomal protein bS18 family. As to quaternary structure, part of the 30S ribosomal subunit. Forms a tight heterodimer with protein bS6.

Binds as a heterodimer with protein bS6 to the central domain of the 16S rRNA, where it helps stabilize the platform of the 30S subunit. In Coprothermobacter proteolyticus (strain ATCC 35245 / DSM 5265 / OCM 4 / BT), this protein is Small ribosomal subunit protein bS18.